Consider the following 81-residue polypeptide: Protein RADIALIS-like 3 (81 aa).

In terms of domain architecture, SANT spans 7–62 (SSSASWTRKENKLFERALATYDQDTPDRWHNVARAVGGKSAEEVRRHYELLIRDVN).

As to expression, expressed just outside the vascular bundles in the rosette stem and the leaf traces. Not detected in floral primordia.

Its subcellular location is the nucleus. Its function is as follows. Probable transcription factor. This Arabidopsis thaliana (Mouse-ear cress) protein is Protein RADIALIS-like 3 (RL3).